The following is a 130-amino-acid chain: Small ribosomal subunit protein eS8 (130 aa).

It belongs to the eukaryotic ribosomal protein eS8 family. In terms of assembly, part of the 30S ribosomal subunit.

The protein is Small ribosomal subunit protein eS8 of Thermococcus onnurineus (strain NA1).